A 391-amino-acid polypeptide reads, in one-letter code: Acetate kinase (391 aa).

N4 contributes to the Mg(2+) binding site. K11 is a binding site for ATP. R85 is a binding site for substrate. The active-site Proton donor/acceptor is the D142. Residues 202-206 (HLGNG), 277-279 (DLR), and 325-329 (GIGEN) contribute to the ATP site. Mg(2+) is bound at residue E378.

Belongs to the acetokinase family. Homodimer. The cofactor is Mg(2+). Mn(2+) serves as cofactor.

The protein localises to the cytoplasm. The enzyme catalyses acetate + ATP = acetyl phosphate + ADP. It functions in the pathway metabolic intermediate biosynthesis; acetyl-CoA biosynthesis; acetyl-CoA from acetate: step 1/2. Its function is as follows. Catalyzes the formation of acetyl phosphate from acetate and ATP. Can also catalyze the reverse reaction. In Halalkalibacterium halodurans (strain ATCC BAA-125 / DSM 18197 / FERM 7344 / JCM 9153 / C-125) (Bacillus halodurans), this protein is Acetate kinase.